A 163-amino-acid polypeptide reads, in one-letter code: 2-C-methyl-D-erythritol 2,4-cyclodiphosphate synthase (163 aa).

2 residues coordinate a divalent metal cation: aspartate 12 and histidine 14. 4-CDP-2-C-methyl-D-erythritol 2-phosphate contacts are provided by residues 12-14 (DVH) and 38-39 (HS). Residue histidine 46 coordinates a divalent metal cation. 4-CDP-2-C-methyl-D-erythritol 2-phosphate contacts are provided by residues 60–62 (DIG), 136–139 (TTSE), phenylalanine 143, and arginine 146.

It belongs to the IspF family. As to quaternary structure, homotrimer. It depends on a divalent metal cation as a cofactor.

It catalyses the reaction 4-CDP-2-C-methyl-D-erythritol 2-phosphate = 2-C-methyl-D-erythritol 2,4-cyclic diphosphate + CMP. It functions in the pathway isoprenoid biosynthesis; isopentenyl diphosphate biosynthesis via DXP pathway; isopentenyl diphosphate from 1-deoxy-D-xylulose 5-phosphate: step 4/6. Its function is as follows. Involved in the biosynthesis of isopentenyl diphosphate (IPP) and dimethylallyl diphosphate (DMAPP), two major building blocks of isoprenoid compounds. Catalyzes the conversion of 4-diphosphocytidyl-2-C-methyl-D-erythritol 2-phosphate (CDP-ME2P) to 2-C-methyl-D-erythritol 2,4-cyclodiphosphate (ME-CPP) with a corresponding release of cytidine 5-monophosphate (CMP). This Xanthomonas campestris pv. campestris (strain 8004) protein is 2-C-methyl-D-erythritol 2,4-cyclodiphosphate synthase.